Here is a 69-residue protein sequence, read N- to C-terminus: Toxin Tma3 (69 aa).

The LCN-type CS-alpha/beta domain maps to 2–66 (KDDYPVDTAK…SPTKKSGRCN (65 aa)). 4 cysteine pairs are disulfide-bonded: Cys14–Cys65, Cys18–Cys41, Cys27–Cys48, and Cys31–Cys50.

Belongs to the long (4 C-C) scorpion toxin superfamily. Sodium channel inhibitor family. In terms of tissue distribution, expressed by the venom gland.

It localises to the secreted. Inhibits voltage-gated sodium channels (Nav). This toxin shows insect lethality against crickets. In Tityus macrochirus (Scorpion), this protein is Toxin Tma3.